Consider the following 167-residue polypeptide: NADPH-dependent 7-cyano-7-deazaguanine reductase (167 aa).

A disordered region spans residues 1 to 24 (MTTRSQDQTRDLKVLGTGRLTSPE). The Thioimide intermediate role is filled by Cys-57. Asp-64 (proton donor) is an active-site residue. Substrate-binding positions include 79–81 (VES) and 98–99 (ME).

Belongs to the GTP cyclohydrolase I family. QueF type 1 subfamily.

The protein localises to the cytoplasm. The enzyme catalyses 7-aminomethyl-7-carbaguanine + 2 NADP(+) = 7-cyano-7-deazaguanine + 2 NADPH + 3 H(+). The protein operates within tRNA modification; tRNA-queuosine biosynthesis. Catalyzes the NADPH-dependent reduction of 7-cyano-7-deazaguanine (preQ0) to 7-aminomethyl-7-deazaguanine (preQ1). The polypeptide is NADPH-dependent 7-cyano-7-deazaguanine reductase (Desulfovibrio desulfuricans (strain ATCC 27774 / DSM 6949 / MB)).